The primary structure comprises 392 residues: Galactokinase (392 aa).

The alpha-D-galactose site is built by R37, E43, H44, and D46. ATP is bound by residues G136, G138, S140, and S141. Position 186 (D186) interacts with alpha-D-galactose. The Proton acceptor role is filled by D186. S230 carries the phosphoserine modification. Position 236 (Y236) interacts with alpha-D-galactose.

This sequence belongs to the GHMP kinase family. GalK subfamily. Homodimer.

The catalysed reaction is alpha-D-galactose + ATP = alpha-D-galactose 1-phosphate + ADP + H(+). Its pathway is carbohydrate metabolism; galactose metabolism. Its function is as follows. Catalyzes the transfer of a phosphate from ATP to alpha-D-galactose and participates in the first committed step in the catabolism of galactose. This chain is Galactokinase (GALK1), found in Bos taurus (Bovine).